A 215-amino-acid chain; its full sequence is Probable serine/threonine-protein kinase 2 (215 aa).

Positions 1–205 constitute a Protein kinase domain; the sequence is MKPEQLVYLN…WLLKEMEQLL (205 aa).

Belongs to the protein kinase superfamily. Ser/Thr protein kinase family. As to quaternary structure, interacts with the kinase domain of host EIF2AK2.

The protein localises to the host cytoplasm. The enzyme catalyses L-seryl-[protein] + ATP = O-phospho-L-seryl-[protein] + ADP + H(+). It catalyses the reaction L-threonyl-[protein] + ATP = O-phospho-L-threonyl-[protein] + ADP + H(+). Functionally, plays a role in the inhibition of host eIF2alpha/EIF2S1 phosphorylation, thereby increasing viral fitness. In the insect host, targets the endogenous insect heme-regulated inhibitor (HRI)-like eIF2alpha kinase. The protein is Probable serine/threonine-protein kinase 2 (PK2) of Autographa californica nuclear polyhedrosis virus (AcMNPV).